A 154-amino-acid chain; its full sequence is Protein-export protein SecB (154 aa).

It belongs to the SecB family. Homotetramer, a dimer of dimers. One homotetramer interacts with 1 SecA dimer.

It localises to the cytoplasm. In terms of biological role, one of the proteins required for the normal export of preproteins out of the cell cytoplasm. It is a molecular chaperone that binds to a subset of precursor proteins, maintaining them in a translocation-competent state. It also specifically binds to its receptor SecA. The protein is Protein-export protein SecB of Blochmanniella pennsylvanica (strain BPEN).